A 217-amino-acid polypeptide reads, in one-letter code: Adenosylcobinamide-GDP ribazoletransferase (217 aa).

5 consecutive transmembrane segments (helical) span residues 6 to 26, 39 to 61, 95 to 115, 116 to 136, and 162 to 182; these read ALLS…FKCA, GPAA…LLLM, GTGG…STAS, PLQL…VAAF, and ALAV…AVAL.

Belongs to the CobS family. Requires Mg(2+) as cofactor.

It localises to the cell membrane. The enzyme catalyses alpha-ribazole + adenosylcob(III)inamide-GDP = adenosylcob(III)alamin + GMP + H(+). It catalyses the reaction alpha-ribazole 5'-phosphate + adenosylcob(III)inamide-GDP = adenosylcob(III)alamin 5'-phosphate + GMP + H(+). It functions in the pathway cofactor biosynthesis; adenosylcobalamin biosynthesis; adenosylcobalamin from cob(II)yrinate a,c-diamide: step 7/7. Functionally, joins adenosylcobinamide-GDP and alpha-ribazole to generate adenosylcobalamin (Ado-cobalamin). Also synthesizes adenosylcobalamin 5'-phosphate from adenosylcobinamide-GDP and alpha-ribazole 5'-phosphate. The sequence is that of Adenosylcobinamide-GDP ribazoletransferase from Pyrobaculum calidifontis (strain DSM 21063 / JCM 11548 / VA1).